The sequence spans 242 residues: Probable transcriptional regulatory protein XAC3151 (242 aa).

This sequence belongs to the TACO1 family.

Its subcellular location is the cytoplasm. This is Probable transcriptional regulatory protein XAC3151 from Xanthomonas axonopodis pv. citri (strain 306).